The primary structure comprises 272 residues: Glutamate racemase (272 aa).

Substrate-binding positions include 16-17 (DS) and 48-49 (YG). Catalysis depends on Cys79, which acts as the Proton donor/acceptor. 80–81 (NT) contacts substrate. Residue Cys191 is the Proton donor/acceptor of the active site. 192–193 (TH) provides a ligand contact to substrate.

This sequence belongs to the aspartate/glutamate racemases family.

It catalyses the reaction L-glutamate = D-glutamate. Its pathway is cell wall biogenesis; peptidoglycan biosynthesis. In terms of biological role, provides the (R)-glutamate required for cell wall biosynthesis. The sequence is that of Glutamate racemase from Chlorobaculum tepidum (strain ATCC 49652 / DSM 12025 / NBRC 103806 / TLS) (Chlorobium tepidum).